We begin with the raw amino-acid sequence, 274 residues long: Dehydration-responsive element-binding protein 2A (274 aa).

2 stretches are compositionally biased toward basic and acidic residues: residues 1–10 and 35–50; these read MERGEGRRGD and KWWK…ENSS. Positions 1–75 are disordered; sequence MERGEGRRGD…KGGPENSNCA (75 aa). Residues 75-132 constitute a DNA-binding region (AP2/ERF); the sequence is AYRGVRQRTWGKWVAEIREPNRGRRLWLGSFPTALEAAHAYDEAARAMYGPTARVNFA.

It belongs to the AP2/ERF transcription factor family. ERF subfamily.

The protein resides in the nucleus. Its function is as follows. Transcriptional activator that binds specifically to the DNA sequence 5'-[AG]CCGAC-3' of the cis-acting dehydration-responsive element (DRE). Binding to the C-repeat/DRE element mediates high salinity- and dehydration-inducible transcription. The sequence is that of Dehydration-responsive element-binding protein 2A (DREB2A) from Oryza sativa subsp. japonica (Rice).